Consider the following 350-residue polypeptide: Atypical chemokine receptor 4 (350 aa).

The Extracellular portion of the chain corresponds to 1-42; sequence MALEQNQSTDYYYEENEMNGTYDYSQYELICIKEDVREFAKV. N-linked (GlcNAc...) asparagine glycans are attached at residues Asn6 and Asn19. The helical transmembrane segment at 43–63 threads the bilayer; sequence FLPVFLTIVFVIGLAGNSMVV. Topologically, residues 64-87 are cytoplasmic; sequence AIYAYYKKQRTKTDVYILNLAVAD. The helical transmembrane segment at 88 to 108 threads the bilayer; the sequence is LLLLFTLPFWAVNAVHGWVLG. The Extracellular segment spans residues 109-113; it reads KIMCK. Residues Cys112 and Cys184 are joined by a disulfide bond. A helical transmembrane segment spans residues 114 to 134; the sequence is ITSALYTLNFVSGMQFLACIS. The Cytoplasmic portion of the chain corresponds to 135–154; that stretch reads IDRYVAVTKVPSQSGVGKPC. Residues 155-175 traverse the membrane as a helical segment; that stretch reads WIICFCVWMAAILLSIPQLVF. Topologically, residues 176-201 are extracellular; it reads YTVNDNARCIPIFPRYLGTSMKALIQ. A helical transmembrane segment spans residues 202–222; that stretch reads MLEICIGFVVPFLIMGVCYFI. The Cytoplasmic segment spans residues 223-240; the sequence is TARTLMKMPNIKISRPLK. Residues 241–261 traverse the membrane as a helical segment; sequence VLLTVVIVFIVTQLPYNIVKF. Topologically, residues 262 to 289 are extracellular; the sequence is CRAIDIIYSLITSCNMSKRMDIAIQVTE. A helical membrane pass occupies residues 290–310; the sequence is SIALFHSCLNPILYVFMGASF. The Cytoplasmic portion of the chain corresponds to 311 to 350; sequence KNYVMKVAKKYGSWRRQRQSVEEFPFDSEGPTEPTSTFSI.

Belongs to the G-protein coupled receptor 1 family. Atypical chemokine receptor subfamily. Forms heteromers with CXCR3. Interacts with ARRB1 and ARRB2. The Ser/Thr residues in the C-terminal cytoplasmic tail may be phosphorylated. As to expression, predominantly expressed in heart. Lower expression in lung, pancreas, spleen, colon, skeletal muscle and small intestine.

Its subcellular location is the early endosome. The protein resides in the recycling endosome. The protein localises to the cell membrane. Its function is as follows. Atypical chemokine receptor that controls chemokine levels and localization via high-affinity chemokine binding that is uncoupled from classic ligand-driven signal transduction cascades, resulting instead in chemokine sequestration, degradation, or transcytosis. Also known as interceptor (internalizing receptor) or chemokine-scavenging receptor or chemokine decoy receptor. Acts as a receptor for chemokines CCL2, CCL8, CCL13, CCL19, CCL21 and CCL25. Chemokine-binding does not activate G-protein-mediated signal transduction but instead induces beta-arrestin recruitment, leading to ligand internalization. Plays an important role in controlling the migration of immune and cancer cells that express chemokine receptors CCR7 and CCR9, by reducing the availability of CCL19, CCL21, and CCL25 through internalization. Negatively regulates CXCR3-induced chemotaxis. Regulates T-cell development in the thymus. The chain is Atypical chemokine receptor 4 (ACKR4) from Homo sapiens (Human).